Consider the following 270-residue polypeptide: MTVLKEQPPRLLRGTPLASKGLRKTFGQREVLKGIDLHIPAGQFVAIVGRSGCGKSTLLRLLAGLDQPTAGQLLAGAAPLEEAREETRLMFQDARLLPWKKVIDNVGLGLSGDWRPRALEALDAVGLADRANEWPAALSGGQKQRVALARALIHQPRLLLLDEPLGALDALTRIEMQQLIERLWRQHGFTVLLVTHDVSEAVAVADRVILIEDGEVGLDLTVDLARPRARGSHRLAALESEVLNRVLSTPGTAPEPDPVAPLPTQLRWAH.

The ABC transporter domain occupies 17 to 238 (LASKGLRKTF…ARGSHRLAAL (222 aa)). 49-56 (GRSGCGKS) lines the ATP pocket. Residues 248-270 (STPGTAPEPDPVAPLPTQLRWAH) are disordered.

It belongs to the ABC transporter superfamily. Aliphatic sulfonates importer (TC 3.A.1.17.2) family. As to quaternary structure, the complex is composed of two ATP-binding proteins (SsuB), two transmembrane proteins (SsuC) and a solute-binding protein (SsuA).

It is found in the cell inner membrane. The catalysed reaction is ATP + H2O + aliphatic sulfonate-[sulfonate-binding protein]Side 1 = ADP + phosphate + aliphatic sulfonateSide 2 + [sulfonate-binding protein]Side 1.. Part of the ABC transporter complex SsuABC involved in aliphatic sulfonates import. Responsible for energy coupling to the transport system. The chain is Aliphatic sulfonates import ATP-binding protein SsuB from Pseudomonas putida (strain ATCC 47054 / DSM 6125 / CFBP 8728 / NCIMB 11950 / KT2440).